Reading from the N-terminus, the 394-residue chain is Gastricsin (394 aa).

The signal sequence occupies residues 1 to 16 (MKWMVVVLLCLPLLEA). A propeptide spans 17–65 (TQIKVPLKKIKSIREVLREKGLLGDFLKNHKPQHARKFFRNRLAKTGDF) (activation peptide). The region spanning 79–391 (YFGQISLGTP…DLANNRVGFA (313 aa)) is the Peptidase A1 domain. Residue Asp97 is part of the active site. 2 disulfides stabilise this stretch: Cys110–Cys115 and Cys273–Cys277. Thr283 is an active-site residue. An intrachain disulfide couples Cys316 to Cys349.

The protein belongs to the peptidase A1 family.

The protein resides in the secreted. It catalyses the reaction More restricted specificity than pepsin A, but shows preferential cleavage at Tyr-|-Xaa bonds. High activity on hemoglobin.. Its function is as follows. Hydrolyzes a variety of proteins. This Cavia porcellus (Guinea pig) protein is Gastricsin (PGC).